A 399-amino-acid polypeptide reads, in one-letter code: Tyrosine--tRNA ligase (399 aa).

The short motif at 42-51 is the 'HIGH' region element; it reads PTAPDIHLGH. Residues 226 to 230 carry the 'KMSKS' region motif; that stretch reads KMSKS. Residue lysine 229 coordinates ATP. One can recognise an S4 RNA-binding domain in the interval 337–398; sequence LTIGYILQRA…GKRRFAKVKV (62 aa).

The protein belongs to the class-I aminoacyl-tRNA synthetase family. TyrS type 2 subfamily. As to quaternary structure, homodimer.

It localises to the cytoplasm. It catalyses the reaction tRNA(Tyr) + L-tyrosine + ATP = L-tyrosyl-tRNA(Tyr) + AMP + diphosphate + H(+). Catalyzes the attachment of tyrosine to tRNA(Tyr) in a two-step reaction: tyrosine is first activated by ATP to form Tyr-AMP and then transferred to the acceptor end of tRNA(Tyr). In Coxiella burnetii (strain RSA 493 / Nine Mile phase I), this protein is Tyrosine--tRNA ligase.